The following is a 257-amino-acid chain: Type 2 phosphatidylinositol 4,5-bisphosphate 4-phosphatase (257 aa).

Basic and acidic residues predominate over residues methionine 1–serine 10. The segment at methionine 1 to proline 34 is disordered. The segment covering leucine 13 to proline 23 has biased composition (polar residues). Residue threonine 22 is modified to Phosphothreonine. Serine 33 carries the phosphoserine modification. The active site involves cysteine 107. Residues cysteine 107 to arginine 113 carry the CX5R motif motif. 2 consecutive transmembrane segments (helical) span residues cysteine 192–glycine 212 and tryptophan 227–isoleucine 247.

Its subcellular location is the late endosome membrane. The protein resides in the lysosome membrane. The protein localises to the cytoplasmic vesicle. It is found in the phagosome membrane. It localises to the cell membrane. It catalyses the reaction a 1,2-diacyl-sn-glycero-3-phospho-(1D-myo-inositol-4,5-bisphosphate) + H2O = a 1,2-diacyl-sn-glycero-3-phospho-(1D-myo-inositol-5-phosphate) + phosphate. Catalyzes the hydrolysis of phosphatidylinositol-4,5-bisphosphate (PtdIns-4,5-P2) to phosphatidylinositol-4-phosphate (PtdIns-4-P). Does not hydrolyze phosphatidylinositol 3,4,5-trisphosphate, phosphatidylinositol 3,4-bisphosphate, inositol 3,5-bisphosphate, inositol 3,4-bisphosphate, phosphatidylinositol 5-monophosphate, phosphatidylinositol 4-monophosphate and phosphatidylinositol 3-monophosphate. Negatively regulates the phagocytosis of large particles by reducing phagosomal phosphatidylinositol 4,5-bisphosphate accumulation during cup formation. The sequence is that of Type 2 phosphatidylinositol 4,5-bisphosphate 4-phosphatase from Bos taurus (Bovine).